The chain runs to 301 residues: MNSPYRGRFAPSPTGPLHFGSLVAAVGSYLDARTQGGEWLVRMEDVDTPRNVPGAADDILRTLDAFGFEWDGPVLYQSKRFEAYAEALDRLKQAGLLYGCACSRKEIADSATHAAIDGGLAYPGTCRGGLPAGRQARAWRLRVDAGETAFIDRLQGRVAQHLEHDVGDFVLRRADGLFAYQLAVVVDDAWQGINAVVRGADLLASTPRQIWLQRCLGYLELTYAHLPVAANPAGEKLSKQTRAQALSVDRAAAELVRALRFLGQGVPEALARGAAADVWAWAGEHWTFDAVPRQSLILLPA.

Residues 8 to 12 (RFAPS) and glutamate 44 contribute to the L-glutamate site. The short motif at 11 to 21 (PSPTGPLHFGS) is the 'HIGH' region element. The Zn(2+) site is built by cysteine 100, cysteine 102, tyrosine 122, and cysteine 126. L-glutamate is bound by residues tyrosine 180 and arginine 198. A 'KMSKS' region motif is present at residues 236 to 240 (KLSKQ). Residue lysine 239 coordinates ATP.

This sequence belongs to the class-I aminoacyl-tRNA synthetase family. GluQ subfamily. The cofactor is Zn(2+).

Its function is as follows. Catalyzes the tRNA-independent activation of glutamate in presence of ATP and the subsequent transfer of glutamate onto a tRNA(Asp). Glutamate is transferred on the 2-amino-5-(4,5-dihydroxy-2-cyclopenten-1-yl) moiety of the queuosine in the wobble position of the QUC anticodon. The chain is Glutamyl-Q tRNA(Asp) synthetase from Dechloromonas aromatica (strain RCB).